Consider the following 324-residue polypeptide: tRNA pseudouridine synthase B (324 aa).

The Nucleophile role is filled by aspartate 49. The segment at 87–107 is disordered; that stretch reads RSTDDLEGQPTKTSDKRPSRE.

Belongs to the pseudouridine synthase TruB family. Type 1 subfamily.

It carries out the reaction uridine(55) in tRNA = pseudouridine(55) in tRNA. Functionally, responsible for synthesis of pseudouridine from uracil-55 in the psi GC loop of transfer RNAs. The chain is tRNA pseudouridine synthase B from Brucella melitensis biotype 1 (strain ATCC 23456 / CCUG 17765 / NCTC 10094 / 16M).